Here is a 127-residue protein sequence, read N- to C-terminus: Small ribosomal subunit protein bS6 (127 aa).

The segment at 99-127 (PLPAPRVVPGSEPAAAPQEQPAANSEAAS) is disordered. Residues 109 to 127 (SEPAAAPQEQPAANSEAAS) show a composition bias toward low complexity.

It belongs to the bacterial ribosomal protein bS6 family.

Its function is as follows. Binds together with bS18 to 16S ribosomal RNA. This Parasynechococcus marenigrum (strain WH8102) protein is Small ribosomal subunit protein bS6.